A 168-amino-acid chain; its full sequence is Putative ankyrin repeat protein RBE_1411 (168 aa).

ANK repeat units lie at residues 59–88, 98–127, and 131–160; these read TIFSELSIAIDKGNLEPLKNFLKNNKLQHK, YGDTPLCYAAEKNNFEVAKILIKYGADLTI, and KGETPIELFSQYGNREAVNYLQHCLDILGN.

The sequence is that of Putative ankyrin repeat protein RBE_1411 from Rickettsia bellii (strain RML369-C).